A 260-amino-acid chain; its full sequence is Small ribosomal subunit protein uS2 (260 aa).

Belongs to the universal ribosomal protein uS2 family.

The sequence is that of Small ribosomal subunit protein uS2 from Streptococcus sanguinis (strain SK36).